The sequence spans 841 residues: Serine/threonine-protein kinase/endoribonuclease IRE1a (841 aa).

The signal sequence occupies residues 1-30 (MPPRCPFLRHLFFLLLLLSPWIMSPCGGAA). At 31–323 (DDVTYPIVPS…KQKYTYLFGQ (293 aa)) the chain is on the lumenal side. N-linked (GlcNAc...) asparagine glycans are attached at residues N100, N104, N119, N132, and N221. Residues 324-344 (WSPVKLLAPLVLLGVVVSVFI) traverse the membrane as a helical segment. Topologically, residues 345–841 (KKFSSRGSDV…FRKYFKCDII (497 aa)) are cytoplasmic. A disordered region spans residues 352 to 382 (SDVSLKAGPSKKKKNRKSAKDTNRQSVPRGQ). Residues 414–704 (FLSSKEIAKG…ATEVLLHPMF (291 aa)) form the Protein kinase domain. ATP-binding positions include 420–428 (IAKGSNGTV) and K442. D570 functions as the Proton acceptor in the catalytic mechanism. In terms of domain architecture, KEN spans 707-838 (SEMRLSFLRD…EEVFRKYFKC (132 aa)).

It belongs to the protein kinase superfamily. Ser/Thr protein kinase family. As to quaternary structure, homodimer; disulfide-linked. Dimer formation is driven by hydrophobic interactions within the N-terminal luminal domains and stabilized by disulfide bridges. The cofactor is Mg(2+). In terms of processing, autophosphorylated. Ubiquitous. Detected in the vascular bundles of young plants, leaves, roots, seedlings and in the receptacles of flowers and vascular bundles of the petals.

Its subcellular location is the endoplasmic reticulum membrane. It carries out the reaction L-seryl-[protein] + ATP = O-phospho-L-seryl-[protein] + ADP + H(+). It catalyses the reaction L-threonyl-[protein] + ATP = O-phospho-L-threonyl-[protein] + ADP + H(+). Its activity is regulated as follows. The kinase domain is activated by trans-autophosphorylation. Kinase activity is required for activation of the endoribonuclease domain. In terms of biological role, senses unfolded proteins in the lumen of the endoplasmic reticulum via its N-terminal domain which leads to enzyme auto-activation. The active endoribonuclease domain splices bZIP60 mRNA to generate a new C-terminus, converting it into a potent unfolded-protein response transcriptional activator which then induces transcription of UPR target genes. Involved in organ growth regulation. Plays a role in plant immunity and abiotic stress responses. This is Serine/threonine-protein kinase/endoribonuclease IRE1a (IRE1A) from Arabidopsis thaliana (Mouse-ear cress).